A 109-amino-acid polypeptide reads, in one-letter code: Nucleoid-associated protein NT01EI_1109 (109 aa).

A disordered region spans residues 89–109 (KERMASVSSGMQLPPGFKMPF).

It belongs to the YbaB/EbfC family. As to quaternary structure, homodimer.

It localises to the cytoplasm. Its subcellular location is the nucleoid. Binds to DNA and alters its conformation. May be involved in regulation of gene expression, nucleoid organization and DNA protection. The protein is Nucleoid-associated protein NT01EI_1109 of Edwardsiella ictaluri (strain 93-146).